The primary structure comprises 233 residues: ATP-dependent dethiobiotin synthetase BioD (233 aa).

Residue 12-17 coordinates ATP; that stretch reads GVGKTI. T16 is a binding site for Mg(2+). K37 is an active-site residue. S41 provides a ligand contact to substrate. ATP-binding positions include D51, 112–115, and 202–204; these read EGAG and PKL. Residues D51 and E112 each contribute to the Mg(2+) site.

This sequence belongs to the dethiobiotin synthetase family. In terms of assembly, homodimer. The cofactor is Mg(2+).

Its subcellular location is the cytoplasm. It catalyses the reaction (7R,8S)-7,8-diammoniononanoate + CO2 + ATP = (4R,5S)-dethiobiotin + ADP + phosphate + 3 H(+). Its pathway is cofactor biosynthesis; biotin biosynthesis; biotin from 7,8-diaminononanoate: step 1/2. Functionally, catalyzes a mechanistically unusual reaction, the ATP-dependent insertion of CO2 between the N7 and N8 nitrogen atoms of 7,8-diaminopelargonic acid (DAPA, also called 7,8-diammoniononanoate) to form a ureido ring. The polypeptide is ATP-dependent dethiobiotin synthetase BioD (Bacillus velezensis (strain DSM 23117 / BGSC 10A6 / LMG 26770 / FZB42) (Bacillus amyloliquefaciens subsp. plantarum)).